The sequence spans 529 residues: O-acetylstemmadenine oxidase (529 aa).

The signal sequence occupies residues 1 to 23 (MIKKVPIVLSIFCFLLLLSSSHG). Residues cysteine 32 and cysteine 92 are joined by a disulfide bond. A glycan (N-linked (GlcNAc...) asparagine) is linked at asparagine 52. An FAD-binding PCMH-type domain is found at 70-244 (KSPKPLAIIT…VSWKVKLVKV (175 aa)). Residues 102–108 (IRSGGAD), serine 113, 168–169 (VS), 173–177 (GIGGH), and phenylalanine 183 contribute to the FAD site. Asparagine 293 is a glycosylation site (N-linked (GlcNAc...) asparagine). Residue tryptophan 465 participates in FAD binding.

The protein belongs to the oxygen-dependent FAD-linked oxidoreductase family. FAD is required as a cofactor. As to expression, expressed in leaf epidermis.

Its subcellular location is the endoplasmic reticulum. It localises to the vacuole. It is found in the vesicle. It catalyses the reaction O-acetyl-15alpha-stemmadenine + O2 = precondylocarpine acetate + H2O2. It participates in alkaloid biosynthesis. Component of the seco-iridoid and derivatives monoterpenoid indole alkaloids (MIAs, e.g. vinblastine, catharanthine, tabersonine, vincadifformine, vindoline, vincristine, quinine and strychnine) biosynthesis pathway. Converts O-acetylstemmadenine (OAS) to reactive acetylated intermediates, likely dihydroprecondylocarpine acetate. This is O-acetylstemmadenine oxidase from Catharanthus roseus (Madagascar periwinkle).